Reading from the N-terminus, the 322-residue chain is GTP 3',8-cyclase (322 aa).

Residues Ser-5–Lys-217 form the Radical SAM core domain. Position 14 (Arg-14) interacts with GTP. [4Fe-4S] cluster is bound by residues Cys-21 and Cys-25. Residue Tyr-27 coordinates S-adenosyl-L-methionine. Residue Cys-28 participates in [4Fe-4S] cluster binding. Residue Arg-64 coordinates GTP. Gly-68 contacts S-adenosyl-L-methionine. Thr-95 contacts GTP. Ser-119 serves as a coordination point for S-adenosyl-L-methionine. A GTP-binding site is contributed by Lys-155. Met-189 contributes to the S-adenosyl-L-methionine binding site. Residues Cys-249 and Cys-252 each contribute to the [4Fe-4S] cluster site. Arg-254–Arg-256 contacts GTP. A [4Fe-4S] cluster-binding site is contributed by Cys-266.

It belongs to the radical SAM superfamily. MoaA family. As to quaternary structure, monomer and homodimer. [4Fe-4S] cluster is required as a cofactor.

It carries out the reaction GTP + AH2 + S-adenosyl-L-methionine = (8S)-3',8-cyclo-7,8-dihydroguanosine 5'-triphosphate + 5'-deoxyadenosine + L-methionine + A + H(+). It functions in the pathway cofactor biosynthesis; molybdopterin biosynthesis. Functionally, catalyzes the cyclization of GTP to (8S)-3',8-cyclo-7,8-dihydroguanosine 5'-triphosphate. The sequence is that of GTP 3',8-cyclase from Campylobacter lari (strain RM2100 / D67 / ATCC BAA-1060).